A 487-amino-acid chain; its full sequence is Cobyric acid synthase (487 aa).

In terms of domain architecture, GATase cobBQ-type spans 251-439 (KLKVVAPAYP…CHGVLDHPEA (189 aa)). C332 serves as the catalytic Nucleophile. The active site involves H431.

It belongs to the CobB/CobQ family. CobQ subfamily.

Its pathway is cofactor biosynthesis; adenosylcobalamin biosynthesis. Its function is as follows. Catalyzes amidations at positions B, D, E, and G on adenosylcobyrinic A,C-diamide. NH(2) groups are provided by glutamine, and one molecule of ATP is hydrogenolyzed for each amidation. This Dechloromonas aromatica (strain RCB) protein is Cobyric acid synthase.